The chain runs to 313 residues: GTPase Era (313 aa).

An Era-type G domain is found at 20 to 187 (RSGFVALIGA…MDYLAETLPE (168 aa)). The tract at residues 28–35 (GATNAGKS) is G1. 28 to 35 (GATNAGKS) provides a ligand contact to GTP. The tract at residues 54–58 (QTTRA) is G2. A G3 region spans residues 75–78 (DTPG). Residues 75–79 (DTPGI) and 137–140 (NKVD) contribute to the GTP site. The segment at 137 to 140 (NKVD) is G4. The segment at 166–168 (ISA) is G5. The 78-residue stretch at 218–295 (LHQELPYASH…HLFLFVKVRE (78 aa)) folds into the KH type-2 domain.

It belongs to the TRAFAC class TrmE-Era-EngA-EngB-Septin-like GTPase superfamily. Era GTPase family. In terms of assembly, monomer.

It localises to the cytoplasm. The protein localises to the cell inner membrane. In terms of biological role, an essential GTPase that binds both GDP and GTP, with rapid nucleotide exchange. Plays a role in 16S rRNA processing and 30S ribosomal subunit biogenesis and possibly also in cell cycle regulation and energy metabolism. This is GTPase Era from Rhizobium meliloti (strain 1021) (Ensifer meliloti).